Here is a 198-residue protein sequence, read N- to C-terminus: MLCGIDEAGRGPLAGPVTAAAVILPSSFDFSILKDSKKLTEKKREEVRKTIYADPNVIWAIGWASNYEIDEINILQATFLAMERAYEGLYLKLQEFCKLNNDKFIEPDIIVDGNFIPNIKNCSSIKALVKADDSVYEVMAASILAKTARDRMMIRYSWIYPEYGYEKHKGYGTKKHIEAIRFNGYSPIQRRSFFVKNL.

The RNase H type-2 domain maps to 1–198 (MLCGIDEAGR…QRRSFFVKNL (198 aa)). Asp6, Glu7, and Asp112 together coordinate a divalent metal cation.

Belongs to the RNase HII family. It depends on Mn(2+) as a cofactor. The cofactor is Mg(2+).

Its subcellular location is the cytoplasm. It carries out the reaction Endonucleolytic cleavage to 5'-phosphomonoester.. Functionally, endonuclease that specifically degrades the RNA of RNA-DNA hybrids. The protein is Ribonuclease HII of Treponema denticola (strain ATCC 35405 / DSM 14222 / CIP 103919 / JCM 8153 / KCTC 15104).